The following is a 303-amino-acid chain: Mitochondrial carrier homolog 2 (303 aa).

Ala2 is modified (N-acetylalanine). The Mitochondrial intermembrane segment spans residues 2 to 15 (ADAASQVLLGSGLT). Solcar repeat units follow at residues 2–98 (ADAA…YQES) and 118–206 (DHVI…VNTY). Residues 16-36 (ILSQPLMYVKVLIQVGYEPLP) traverse the membrane as a helical segment. Residues 37–77 (PTIGRNIFGRQVCQLPGLFSYAQHIASIDGRRGLFTGLTPR) lie on the Cytoplasmic side of the membrane. A helical membrane pass occupies residues 78–92 (LCSGVLGTVVHGKVL). The Mitochondrial intermembrane segment spans residues 93-135 (QHYQESDKGEELGPGNVQKEVSSSFDHVIKETTREMIARSAAT). A helical membrane pass occupies residues 136 to 156 (LITHPFHVITLRSMVQFIGRE). Over 157–180 (SKYCGLCDSIITIYREEGILGFFA) the chain is Cytoplasmic. A helical membrane pass occupies residues 181–199 (GLVPRLLGDILSLWLCNSL). Topologically, residues 200 to 231 (AYLVNTYALDSGVSTMNEMKSYSQAVTGFFAS) are mitochondrial intermembrane. The chain crosses the membrane as a helical span at residues 232–252 (MLTYPFVLVSNLMAVNNCGLA). The Cytoplasmic segment spans residues 253 to 280 (GGCPPYSPIYTSWIDCWCMLQKEGNMSR). A helical transmembrane segment spans residues 281 to 303 (GNSLFFRKVPFGKTYCCDLKMLI).

It belongs to the mitochondrial carrier (TC 2.A.29) family. In terms of assembly, interacts with p15BID.

It localises to the mitochondrion outer membrane. Protein insertase that mediates insertion of transmembrane proteins into the mitochondrial outer membrane. Catalyzes insertion of proteins with alpha-helical transmembrane regions, such as signal-anchored, tail-anchored and multi-pass membrane proteins. Does not mediate insertion of beta-barrel transmembrane proteins. Also acts as a receptor for the truncated form of pro-apoptotic BH3-interacting domain death agonist (p15 BID) and has therefore a critical function in apoptosis. Regulates the quiescence/cycling of hematopoietic stem cells (HSCs). Acts as a regulator of mitochondrial fusion, essential for the naive-to-primed interconversion of embryonic stem cells (ESCs). Acts as a regulator of lipid homeostasis and has a regulatory role in adipocyte differentiation and biology. The protein is Mitochondrial carrier homolog 2 of Homo sapiens (Human).